The chain runs to 666 residues: Collagen alpha-1(XXV) chain (666 aa).

Residues 1–24 (MLVKKLAGKGGGRESGSEDPRPLG) are disordered. Residues 1–33 (MLVKKLAGKGGGRESGSEDPRPLGQRCAGTMPS) are Cytoplasmic-facing. The segment covering 11 to 21 (GGRESGSEDPR) has biased composition (basic and acidic residues). Residues 34-54 (CTALATLLSVVAVAFCFYLGV) traverse the membrane as a helical; Signal-anchor for type II membrane protein segment. The Extracellular segment spans residues 55–666 (KTNDLQARIA…GLPMPGCWQK (612 aa)). Residues 116–168 (LECNCPAGPPGKRGKRGRRGESGPPGQPGPQGPPGPKGDKGEQGDQGPRMVFP) are disordered. Residues 121–164 (PAGPPGKRGKRGRRGESGPPGQPGPQGPPGPKGDKGEQGDQGPR) form the Collagen-like 1 domain. Positions 140–151 (PGQPGPQGPPGP) are enriched in pro residues. Residues 181-188 (LIKRRLIK) form an interaction with amyloid-beta peptide region. Disordered stretches follow at residues 189 to 428 (GDQG…ATEI) and 445 to 666 (LTVT…CWQK). 7 consecutive Collagen-like domains span residues 192 to 247 (GQAG…QKGS), 249 to 308 (GAPG…PGSS), 311 to 370 (GIKG…AGPP), 373 to 425 (GERG…DPGA), 455 to 514 (GPQG…KGEK), 529 to 588 (GPPG…KGAM), and 589 to 648 (GEPG…DGLD). Pro residues predominate over residues 196–208 (PPGPPGPPGPRGP). Residues 230–245 (PGEQGLMGPLGPPGQK) are compositionally biased toward low complexity. The span at 280–290 (EPGKEGEKGDA) shows a compositional bias: basic and acidic residues. The segment covering 336–358 (LPGIKGEPGFIGPQGEPGLPGLP) has biased composition (low complexity). 2 stretches are compositionally biased toward basic and acidic residues: residues 361 to 377 (KGDR…ERGD) and 398 to 407 (SKGDRGDKGD). The span at 457–466 (QGLQGPKGEQ) shows a compositional bias: low complexity. Residues 494–503 (GEKGGLGLPG) show a composition bias toward gly residues. Pro residues predominate over residues 528 to 543 (IGPPGPPGPHGPPGPM). Over residues 615–638 (RGEKGDLGEKGEKGFRGVKGEKGE) the composition is skewed to basic and acidic residues.

In terms of assembly, forms homodimers and homotrimers. Binds to the fibrillized forms of amyloid-beta protein 40 (beta-APP40) and amyloid-betad protein 42 (beta-APP42). Found associated with beta-APP42 more frequently than with beta-APP40. Undergoes proteolytic cleavage by furin protease to yield the soluble collagen-like Alzheimer amyloid plaque component. In terms of processing, glycosylated. Post-translationally, hydroxylated on proline and lysine residues. In terms of tissue distribution, expressed predominantly in neurons with low levels also detected in heart, testis and eye.

Its subcellular location is the membrane. In terms of biological role, inhibits fibrillization of amyloid-beta peptide during the elongation phase. Has also been shown to assemble amyloid fibrils into protease-resistant aggregates. Binds heparin. This chain is Collagen alpha-1(XXV) chain, found in Mus musculus (Mouse).